Consider the following 249-residue polypeptide: UDP-N-acetyl-D-mannosaminuronic acid transferase (249 aa).

This sequence belongs to the glycosyltransferase 26 family.

It carries out the reaction UDP-N-acetyl-alpha-D-mannosaminouronate + N-acetyl-alpha-D-glucosaminyl-di-trans,octa-cis-undecaprenyl diphosphate = beta-D-ManNAcA-(1-&gt;4)-alpha-D-GlcNAc-di-trans,octa-cis-undecaprenyl diphosphate + UDP + H(+). It participates in bacterial outer membrane biogenesis; enterobacterial common antigen biosynthesis. Catalyzes the synthesis of Und-PP-GlcNAc-ManNAcA (Lipid II), the second lipid-linked intermediate involved in enterobacterial common antigen (ECA) synthesis. The protein is UDP-N-acetyl-D-mannosaminuronic acid transferase of Pectobacterium atrosepticum (strain SCRI 1043 / ATCC BAA-672) (Erwinia carotovora subsp. atroseptica).